A 335-amino-acid chain; its full sequence is Spliceosome-associated protein 49 (335 aa).

RRM domains lie at isoleucine 13–valine 84 and leucine 101–valine 172. Residues valine 204–serine 223 form a disordered region.

Belongs to the SF3B4 family.

Its subcellular location is the nucleus. The chain is Spliceosome-associated protein 49 (sap49) from Schizosaccharomyces pombe (strain 972 / ATCC 24843) (Fission yeast).